Reading from the N-terminus, the 312-residue chain is tRNA dimethylallyltransferase (312 aa).

18 to 25 contacts ATP; that stretch reads GPTASGKS. 20–25 contacts substrate; sequence TASGKS. 2 interaction with substrate tRNA regions span residues 43–46 and 167–171; these read DSMQ and QRILR.

Belongs to the IPP transferase family. Monomer. Mg(2+) serves as cofactor.

The catalysed reaction is adenosine(37) in tRNA + dimethylallyl diphosphate = N(6)-dimethylallyladenosine(37) in tRNA + diphosphate. Catalyzes the transfer of a dimethylallyl group onto the adenine at position 37 in tRNAs that read codons beginning with uridine, leading to the formation of N6-(dimethylallyl)adenosine (i(6)A). The sequence is that of tRNA dimethylallyltransferase from Azorhizobium caulinodans (strain ATCC 43989 / DSM 5975 / JCM 20966 / LMG 6465 / NBRC 14845 / NCIMB 13405 / ORS 571).